The sequence spans 566 residues: MKISRQAYADMFGPTVGDKVRLADTELWIEVEKDFTTYGEEVKFGGGKVIRDGMGQGQLLAADVVDTLITNALIIDHWGIVKADVGIKNGRIAAIGKAGNPDIQPDVTIAVGAATEVIAGEGMILTAGGVDTHIHFICPQQIEEALMSGVTTMIGGGTGPATGTNATTVTPGPWHMARMLQASDSFPMNIGFTGKGNVSLPGPLIEQVKAGAIGLKLHEDWGTTPAAIDNCLSVADEYDVQVAIHTDTLNESGFVETTLAAFKNRTIHTYHTEGAGGGHAPDIIKACGSPNVLPSSTNPTRPFTRNTIDEHLDMLMVCHHLDPSIAEDVAFAESRIRRETIAAEDILHDLGAFSMLSSDSQAMGRVGEVIMRTWQTADKMKKQRGPLPQDGPGNDNFRAKRYIAKYTINPAITHGISHEVGSIEVGKWADLVLWRPAFFGVKPTLILKGGAIAASLMGDANASIPTPQPVHYRPMFASFGSSLHATSLTFISQAAFDAGVPETLGLKKQIGVVKGCRTVQKKDLIHNDYLPDIEVDPQTYQVKADGVLLWCEPADVLPMAQRYFLF.

A Urease domain is found at 128-566 (GGVDTHIHFI…LPMAQRYFLF (439 aa)). Ni(2+) contacts are provided by H133, H135, and K216. K216 carries the post-translational modification N6-carboxylysine. H218 is a binding site for substrate. The Ni(2+) site is built by H245 and H271. The active-site Proton donor is H319. Residue D359 participates in Ni(2+) binding.

It belongs to the metallo-dependent hydrolases superfamily. Urease alpha subunit family. May form a heterohexamer of 3 UreC (alpha) and 3 UreAB (gamma/beta) subunits. May also form a heterotrimer of UreA (gamma), UreB (beta) and UreC (alpha) subunits. Three heterotrimers associate to form the active enzyme. Ni cation serves as cofactor. Post-translationally, carboxylation allows a single lysine to coordinate two nickel ions.

The protein localises to the cytoplasm. The catalysed reaction is urea + 2 H2O + H(+) = hydrogencarbonate + 2 NH4(+). The protein operates within nitrogen metabolism; urea degradation; CO(2) and NH(3) from urea (urease route): step 1/1. This Pseudomonas syringae pv. tomato (strain ATCC BAA-871 / DC3000) protein is Urease subunit alpha.